We begin with the raw amino-acid sequence, 464 residues long: Argininosuccinate lyase (464 aa).

It belongs to the lyase 1 family. Argininosuccinate lyase subfamily.

The protein resides in the cytoplasm. The enzyme catalyses 2-(N(omega)-L-arginino)succinate = fumarate + L-arginine. It functions in the pathway amino-acid biosynthesis; L-arginine biosynthesis; L-arginine from L-ornithine and carbamoyl phosphate: step 3/3. In Pseudomonas aeruginosa (strain ATCC 15692 / DSM 22644 / CIP 104116 / JCM 14847 / LMG 12228 / 1C / PRS 101 / PAO1), this protein is Argininosuccinate lyase.